The sequence spans 297 residues: 4-diphosphocytidyl-2-C-methyl-D-erythritol kinase (297 aa).

Lys-14 is a catalytic residue. 99 to 109 (PVAAGIGGGSA) provides a ligand contact to ATP. Asp-141 is a catalytic residue.

It belongs to the GHMP kinase family. IspE subfamily.

The enzyme catalyses 4-CDP-2-C-methyl-D-erythritol + ATP = 4-CDP-2-C-methyl-D-erythritol 2-phosphate + ADP + H(+). The protein operates within isoprenoid biosynthesis; isopentenyl diphosphate biosynthesis via DXP pathway; isopentenyl diphosphate from 1-deoxy-D-xylulose 5-phosphate: step 3/6. Its function is as follows. Catalyzes the phosphorylation of the position 2 hydroxy group of 4-diphosphocytidyl-2C-methyl-D-erythritol. In Bradyrhizobium diazoefficiens (strain JCM 10833 / BCRC 13528 / IAM 13628 / NBRC 14792 / USDA 110), this protein is 4-diphosphocytidyl-2-C-methyl-D-erythritol kinase.